Consider the following 254-residue polypeptide: Undecaprenyl-diphosphatase (254 aa).

8 helical membrane passes run 1–21, 41–61, 75–95, 96–116, 130–150, 174–194, 210–230, and 234–254; these read MGIIESIILGIVEGLTEFLPV, AHKAFEVAIQSGAILAVVFLY, LIIAFIPTGILGFLLYKIIKG, LFSPYIVSIMLIVGGLVFIAV, ILKIPYYKAFFIGVFQSIAMI, AEFSFLLAVPTMFAATSYDIM, TGFVTAFVFAVLAIKLFIGFV, and NFVPFGIYRIILGFIFLLFVL.

It belongs to the UppP family.

The protein localises to the cell inner membrane. The enzyme catalyses di-trans,octa-cis-undecaprenyl diphosphate + H2O = di-trans,octa-cis-undecaprenyl phosphate + phosphate + H(+). Catalyzes the dephosphorylation of undecaprenyl diphosphate (UPP). Confers resistance to bacitracin. The chain is Undecaprenyl-diphosphatase from Persephonella marina (strain DSM 14350 / EX-H1).